A 125-amino-acid chain; its full sequence is Small ribosomal subunit protein uS12m (125 aa).

It belongs to the universal ribosomal protein uS12 family.

It localises to the mitochondrion. Its function is as follows. Protein S12 is involved in the translation initiation step. This is Small ribosomal subunit protein uS12m (RPS12) from Helianthus annuus (Common sunflower).